A 54-amino-acid polypeptide reads, in one-letter code: UPF0391 membrane protein TERTU_3637 (54 aa).

The next 2 membrane-spanning stretches (helical) occupy residues tryptophan 4–alanine 24 and serine 29–glycine 49.

The protein belongs to the UPF0391 family.

The protein localises to the cell membrane. This chain is UPF0391 membrane protein TERTU_3637, found in Teredinibacter turnerae (strain ATCC 39867 / T7901).